We begin with the raw amino-acid sequence, 1032 residues long: Phosphoenolpyruvate carboxylase 4 (1032 aa).

Residue His-154 is part of the active site. The disordered stretch occupies residues 377-407 (PNLQKQNEQDFSESDWEKIDNGSRSGLTSRG). Residues 398–407 (GSRSGLTSRG) are compositionally biased toward polar residues. Lys-699 is an active-site residue.

The protein belongs to the PEPCase type 1 family. In terms of assembly, homotetramer. Mg(2+) serves as cofactor. Expressed at low levels in flowers and siliques, and detectable in roots.

It is found in the cytoplasm. The catalysed reaction is oxaloacetate + phosphate = phosphoenolpyruvate + hydrogencarbonate. In terms of biological role, through the carboxylation of phosphoenolpyruvate (PEP) it forms oxaloacetate, a four-carbon dicarboxylic acid source for the tricarboxylic acid cycle. This Arabidopsis thaliana (Mouse-ear cress) protein is Phosphoenolpyruvate carboxylase 4 (PPC4).